The sequence spans 173 residues: Large ribosomal subunit protein uL22c (173 aa).

This sequence belongs to the universal ribosomal protein uL22 family. As to quaternary structure, part of the 50S ribosomal subunit.

It localises to the plastid. The protein resides in the chloroplast. Functionally, this protein binds specifically to 23S rRNA. In terms of biological role, the globular domain of the protein is located near the polypeptide exit tunnel on the outside of the subunit, while an extended beta-hairpin is found that lines the wall of the exit tunnel in the center of the 70S ribosome. This Drimys granadensis protein is Large ribosomal subunit protein uL22c (rpl22).